The sequence spans 942 residues: DNA mismatch repair protein MSH2 (942 aa).

667–674 (GPNMGGKS) serves as a coordination point for ATP.

Belongs to the DNA mismatch repair MutS family. Heterodimer of MSH2 and MSH6 (GTBP).

Its subcellular location is the nucleus. Involved in postreplication mismatch repair. Binds specifically to DNA containing mismatched nucleotides thus providing a target for the excision repair processes characteristic of postreplication mismatch repair. This Zea mays (Maize) protein is DNA mismatch repair protein MSH2 (MUS1).